Here is a 1283-residue protein sequence, read N- to C-terminus: Oxysterol-binding protein homolog 2 (1283 aa).

Position 2 is an N-acetylserine (Ser-2). A Phosphoserine modification is found at Ser-7. ANK repeat units follow at residues 106 to 134 (NGNT…SIND) and 206 to 235 (TGTT…EATV). A PH domain is found at 289 to 386 (PPTYKGFLKK…WVNAIQSAIR (98 aa)). Residues Ser-422, Ser-445, Ser-451, Ser-455, Ser-458, Ser-459, and Ser-486 each carry the phosphoserine modification. Thr-488 carries the phosphothreonine modification. 2 stretches are compositionally biased toward polar residues: residues 504–518 (SNTL…SGSG) and 530–551 (ANLS…NNYI). 2 disordered regions span residues 504-571 (SNTL…LGIN) and 702-721 (TAGN…DTTA). A phosphoserine mark is found at Ser-512 and Ser-515. Acidic residues predominate over residues 554–568 (FEGDEANSDDEEEDL). The segment covering 707-716 (ESLENDKEQE) has biased composition (basic and acidic residues). Ser-717 is modified (phosphoserine). The FFAT signature appears at 745–751 (EFYDAAE). Residues 767 to 834 (STAAAPKHAP…SLKNFKAEDK (68 aa)) are disordered. Phosphothreonine is present on Thr-783. At Ser-787 the chain carries Phosphoserine. 2 stretches are compositionally biased toward basic and acidic residues: residues 791–810 (QDEK…KFEK) and 818–834 (DEPK…AEDK). Phosphoserine occurs at positions 825 and 1151. An OSBP-related domain (ORD) region spans residues 897–1268 (SLWAVLKSMV…KYWRYTGKYW (372 aa)).

The protein belongs to the OSBP family. In terms of assembly, interacts with SCS2.

Its subcellular location is the cell membrane. The protein resides in the endoplasmic reticulum membrane. Lipid transport protein (LTP) involved in non-vesicular transfer of lipids between membranes. Functions in phosphoinositide-coupled directional transport of various lipids by carrying the lipid molecule in a hydrophobic pocket and transferring it between membranes through the cytosol. Involved in maintenance of intracellular sterol distribution and homeostasis. Binds and transports sterol. Plays a role in the positive regulation of vesicular transport of ceramide from the ER to the Golgi, negatively regulating COPII-mediated ER export of cargos. In Saccharomyces cerevisiae (strain ATCC 204508 / S288c) (Baker's yeast), this protein is Oxysterol-binding protein homolog 2.